A 51-amino-acid chain; its full sequence is Large ribosomal subunit protein eL39 (51 aa).

The protein belongs to the eukaryotic ribosomal protein eL39 family.

The polypeptide is Large ribosomal subunit protein eL39 (Saccharolobus islandicus (strain L.S.2.15 / Lassen #1) (Sulfolobus islandicus)).